The sequence spans 287 residues: Acetylglutamate kinase (287 aa).

Substrate is bound by residues 64 to 65 (GG), R86, and N185.

It belongs to the acetylglutamate kinase family. ArgB subfamily.

The protein resides in the cytoplasm. The catalysed reaction is N-acetyl-L-glutamate + ATP = N-acetyl-L-glutamyl 5-phosphate + ADP. It participates in amino-acid biosynthesis; L-arginine biosynthesis; N(2)-acetyl-L-ornithine from L-glutamate: step 2/4. Functionally, catalyzes the ATP-dependent phosphorylation of N-acetyl-L-glutamate. The polypeptide is Acetylglutamate kinase (Hydrogenobaculum sp. (strain Y04AAS1)).